The sequence spans 202 residues: UPF0301 protein BCG_0069 (202 aa).

It belongs to the UPF0301 (AlgH) family.

The polypeptide is UPF0301 protein BCG_0069 (Mycobacterium bovis (strain BCG / Pasteur 1173P2)).